A 605-amino-acid polypeptide reads, in one-letter code: Formin-binding protein 1-like (605 aa).

The 263-residue stretch at 1-263 folds into the F-BAR domain; the sequence is MSWGTELWDQ…AAKSVDERRD (263 aa). Residues 66-258 are a coiled coil; it reads FTSCIAFFNI…EGMILAAKSV (193 aa). The tract at residues 245-535 is interaction with CDC42; that stretch reads SKCLEGMILA…EFDDEFEDDD (291 aa). Ser-295 is subject to Phosphoserine. The disordered stretch occupies residues 325–345; it reads FGKKPKPQSPPLTPTSLFTSS. Positions 392–484 form a coiled coil; that stretch reads LEDFSHLPPE…VEGKTGVRGD (93 aa). One can recognise an REM-1 domain in the interval 397–474; that stretch reads HLPPEQRRKK…IHKNEAWLSE (78 aa). Residues 480-490 are compositionally biased toward basic and acidic residues; that stretch reads GVRGDRRHSSD. The segment at 480–539 is disordered; that stretch reads GVRGDRRHSSDINHLVTQGRESPEGSYTDDANQEVRGPPQQHGHHSEFDDEFEDDDPLPA. 3 positions are modified to phosphoserine: Ser-488, Ser-501, and Ser-505. The interaction with DNM1 stretch occupies residues 522–605; that stretch reads GHHSEFDDEF…VTLEKNSKGS (84 aa). A compositionally biased stretch (acidic residues) spans 527-536; sequence FDDEFEDDDP. The region spanning 538–599 is the SH3 domain; the sequence is PAIGHCKAIY…PTTYIDVTLE (62 aa). Positions 541-597 are interaction with DNM2 and WASL; the sequence is GHCKAIYPFDGHNEGTLAMKEGEVLYIIEEDKGDGWTRARRQNGEEGYVPTTYIDVT. The tract at residues 541–605 is interaction with DAAM1, DIAPH1 and DIAPH2; it reads GHCKAIYPFD…VTLEKNSKGS (65 aa).

The protein belongs to the FNBP1 family. As to quaternary structure, homodimerizes, the dimers can polymerize end-to-end to form filamentous structures. Interacts with GTP-bound CDC42. Interacts with DAAM1, DIAPH1, DIAPH2, DNM1, DNM2 and WASL/N-WASP. Interacts with ATG3. Interacts (via SH3 domain) with ABI1, WASF2, CDC42 and WIPF1. In terms of tissue distribution, isoform 1 is expressed in brain. Isoform 2 is expressed in brain, kidney and lung. Within the brain expression is seen in cortical neurons, hippocampal pyramidal neurons, hypothalamus and piriform cortex.

It is found in the cytoplasm. The protein localises to the cytoskeleton. Its subcellular location is the cell cortex. It localises to the cytoplasmic vesicle. The protein resides in the cell membrane. Functionally, required to coordinate membrane tubulation with reorganization of the actin cytoskeleton during endocytosis. May bind to lipids such as phosphatidylinositol 4,5-bisphosphate and phosphatidylserine and promote membrane invagination and the formation of tubules. Also promotes CDC42-induced actin polymerization by activating the WASL-WASPIP complex, the predominant form of WASL/N-WASP in cells. Actin polymerization may promote the fission of membrane tubules to form endocytic vesicles. Essential for autophagy of intracellular bacterial pathogens. May negatively regulate neurite extension and axon branching in developing neurons. The polypeptide is Formin-binding protein 1-like (Fnbp1l) (Rattus norvegicus (Rat)).